Reading from the N-terminus, the 163-residue chain is Ubiquitin-like protein 1-ribosomal protein eS31 fusion protein (163 aa).

Residues 1–70 (MVFVKTLHRT…IYVNLELLGG (70 aa)) form the Ubiquitin-like domain. Residue Gly70 forms a Glycyl lysine isopeptide (Gly-Lys) (interchain with K-? in acceptor proteins) linkage. A C4-type zinc finger spans residues 115 to 138 (CQQPSCGGGVFMAQHANRHYCGRC).

The protein in the N-terminal section; belongs to the ubiquitin family. This sequence in the C-terminal section; belongs to the eukaryotic ribosomal protein eS31 family.

The chain is Ubiquitin-like protein 1-ribosomal protein eS31 fusion protein from Caenorhabditis elegans.